A 506-amino-acid polypeptide reads, in one-letter code: Pisatin demethylase (506 aa).

A heme-binding site is contributed by Cys-453.

The protein belongs to the cytochrome P450 family. The cofactor is heme.

Can detoxify the phytoalexin pisatin from garden pea. Pisatin is an antimicrobial compound produced by pea in response to infection by plant pathogens. The sequence is that of Pisatin demethylase (PDA6-1) from Fusarium vanettenii (Neocosmospora pisi).